The chain runs to 402 residues: uncharacterized protein (402 aa).

The protein to M.genitalium MG148.

This is an uncharacterized protein from Caldicellulosiruptor sp. (strain Rt8B.4).